The chain runs to 373 residues: P2Y purinoceptor 1 (373 aa).

At 1–51 (MTEVPWSVVPNGTDAAFLAGLGSLWGNSTVASTAAVSSSFQCALTKTGFQF) the chain is on the extracellular side. N-linked (GlcNAc...) asparagine glycosylation is found at Asn-11 and Asn-27. Cystine bridges form between Cys-42–Cys-296 and Cys-124–Cys-202. Lys-46 contributes to the ADP binding site. A helical membrane pass occupies residues 52–74 (YYLPAVYILVFIIGFLGNSVAIW). Topologically, residues 75-87 (MFVFHMKPWSGIS) are cytoplasmic. The helical transmembrane segment at 88–109 (VYMFNLALADFLYVLTLPALIF) threads the bilayer. At 110 to 125 (YYFNKTDWIFGDAMCK) the chain is on the extracellular side. An N-linked (GlcNAc...) asparagine glycan is attached at Asn-113. The chain crosses the membrane as a helical span at residues 126 to 147 (LQRFIFHVNLYGSILFLTCISA). Topologically, residues 148–166 (HRYSGVVYPLKSLGRLKKK) are cytoplasmic. Residues 167–188 (NAIYVSVLVWLIVVVAISPILF) traverse the membrane as a helical segment. The Extracellular segment spans residues 189 to 214 (YSGTGTRKNKTVTCYDTTSNDYLRSY). An N-linked (GlcNAc...) asparagine glycan is attached at Asn-197. 203-205 (YDT) contributes to the ADP binding site. The helical transmembrane segment at 215 to 237 (FIYSMCTTVAMFCIPLVLILGCY) threads the bilayer. The Cytoplasmic portion of the chain corresponds to 238 to 260 (GLIVKALIYNDLDNSPLRRKSIY). A helical transmembrane segment spans residues 261–284 (LVIIVLTVFAVSYIPFHVMKTMNL). ADP is bound by residues 283–287 (NLRAR), 303–306 (YATY), and Arg-310. Over 285 to 303 (RARLDFQTPEMCDFNDRVY) the chain is Extracellular. Residues 304–325 (ATYQVTRGLASLNSCVDPILYF) form a helical membrane-spanning segment. At 326-373 (LAGDTFRRRLSRATRKASRRSEANLQSKSEEMTLNILSEFKQNGDTSL) the chain is on the cytoplasmic side.

This sequence belongs to the G-protein coupled receptor 1 family.

The protein resides in the cell membrane. Receptor for extracellular adenine nucleotides such as ADP. In platelets, binding to ADP leads to mobilization of intracellular calcium ions via activation of phospholipase C, a change in platelet shape, and ultimately platelet aggregation. The sequence is that of P2Y purinoceptor 1 (P2ry1) from Mus musculus (Mouse).